We begin with the raw amino-acid sequence, 70 residues long: ATP synthase subunit c (70 aa).

2 helical membrane passes run 1–21 and 47–67; these read MNFLAAAIAAGLAAFAASYGN and FIGVGLIEAVPILSIVVSFLI.

This sequence belongs to the ATPase C chain family. In terms of assembly, F-type ATPases have 2 components, F(1) - the catalytic core - and F(0) - the membrane proton channel. F(1) has five subunits: alpha(3), beta(3), gamma(1), delta(1), epsilon(1). F(0) has three main subunits: a(1), b(2) and c(10-14). The alpha and beta chains form an alternating ring which encloses part of the gamma chain. F(1) is attached to F(0) by a central stalk formed by the gamma and epsilon chains, while a peripheral stalk is formed by the delta and b chains.

The protein resides in the cell membrane. Its function is as follows. F(1)F(0) ATP synthase produces ATP from ADP in the presence of a proton or sodium gradient. F-type ATPases consist of two structural domains, F(1) containing the extramembraneous catalytic core and F(0) containing the membrane proton channel, linked together by a central stalk and a peripheral stalk. During catalysis, ATP synthesis in the catalytic domain of F(1) is coupled via a rotary mechanism of the central stalk subunits to proton translocation. In terms of biological role, key component of the F(0) channel; it plays a direct role in translocation across the membrane. A homomeric c-ring of between 10-14 subunits forms the central stalk rotor element with the F(1) delta and epsilon subunits. This Latilactobacillus sakei subsp. sakei (strain 23K) (Lactobacillus sakei subsp. sakei) protein is ATP synthase subunit c.